The chain runs to 254 residues: D-aminoacyl-tRNA deacylase (254 aa).

Positions 61–85 are disordered; it reads KPTLTVHTPGNLTEDNSRGGNSEEI. Polar residues predominate over residues 65–84; it reads TVHTPGNLTEDNSRGGNSEE.

The protein belongs to the DtdA deacylase family. In terms of assembly, monomer. Requires Zn(2+) as cofactor.

It catalyses the reaction a D-aminoacyl-tRNA + H2O = a tRNA + a D-alpha-amino acid + H(+). It carries out the reaction glycyl-tRNA(Ala) + H2O = tRNA(Ala) + glycine + H(+). In terms of biological role, D-aminoacyl-tRNA deacylase with broad substrate specificity. By recycling D-aminoacyl-tRNA to D-amino acids and free tRNA molecules, this enzyme counteracts the toxicity associated with the formation of D-aminoacyl-tRNA entities in vivo. The chain is D-aminoacyl-tRNA deacylase from Methanococcus maripaludis (strain C5 / ATCC BAA-1333).